Here is a 392-residue protein sequence, read N- to C-terminus: ATP phosphoribosyltransferase regulatory subunit (392 aa).

It belongs to the class-II aminoacyl-tRNA synthetase family. HisZ subfamily. In terms of assembly, heteromultimer composed of HisG and HisZ subunits.

Its subcellular location is the cytoplasm. It participates in amino-acid biosynthesis; L-histidine biosynthesis; L-histidine from 5-phospho-alpha-D-ribose 1-diphosphate: step 1/9. Required for the first step of histidine biosynthesis. May allow the feedback regulation of ATP phosphoribosyltransferase activity by histidine. The protein is ATP phosphoribosyltransferase regulatory subunit of Gloeobacter violaceus (strain ATCC 29082 / PCC 7421).